The sequence spans 373 residues: Probable pectin lyase C (373 aa).

Positions 1–17 (MKKYLLSLLAAVTYTTA) are cleaved as a signal peptide. Intrachain disulfides connect C78/C95 and C87/C215. N-linked (GlcNAc...) asparagine glycosylation is found at N140 and N229. R245 is an active-site residue. Residues C315 and C323 are joined by a disulfide bond.

Belongs to the polysaccharide lyase 1 family.

It localises to the secreted. The catalysed reaction is Eliminative cleavage of (1-&gt;4)-alpha-D-galacturonan methyl ester to give oligosaccharides with 4-deoxy-6-O-methyl-alpha-D-galact-4-enuronosyl groups at their non-reducing ends.. In terms of biological role, pectinolytic enzymes consist of four classes of enzymes: pectin lyase, polygalacturonase, pectin methylesterase and rhamnogalacturonase. Among pectinolytic enzymes, pectin lyase is the most important in depolymerization of pectin, since it cleaves internal glycosidic bonds of highly methylated pectins. This chain is Probable pectin lyase C (pelC), found in Emericella nidulans (strain FGSC A4 / ATCC 38163 / CBS 112.46 / NRRL 194 / M139) (Aspergillus nidulans).